We begin with the raw amino-acid sequence, 134 residues long: uncharacterized protein (134 aa).

A run of 3 helical transmembrane segments spans residues 8–28 (FTSLMLTCANIMLQMYFTVMY), 54–74 (GFQAFSALLLLLSGAWITFLL), and 113–133 (LACFAVFFFVYLFLFVSRLVD).

It belongs to the cornichon family.

The protein localises to the endoplasmic reticulum membrane. This is an uncharacterized protein from Schizosaccharomyces pombe (strain 972 / ATCC 24843) (Fission yeast).